The chain runs to 260 residues: Ribonuclease HII (260 aa).

In terms of domain architecture, RNase H type-2 spans 70–260 (QAIAGIDEVG…PIKSMLKEKN (191 aa)). The a divalent metal cation site is built by aspartate 76, glutamate 77, and aspartate 171.

This sequence belongs to the RNase HII family. Mn(2+) serves as cofactor. Requires Mg(2+) as cofactor.

Its subcellular location is the cytoplasm. The enzyme catalyses Endonucleolytic cleavage to 5'-phosphomonoester.. Endonuclease that specifically degrades the RNA of RNA-DNA hybrids. This is Ribonuclease HII from Streptococcus mutans serotype c (strain ATCC 700610 / UA159).